The sequence spans 268 residues: Putative esterase/lipase 2 (268 aa).

His-28 is a catalytic residue. His-96 functions as the Charge relay system in the catalytic mechanism.

It belongs to the lipase/esterase LIP3/BchO family.

The protein is Putative esterase/lipase 2 of Mycoplasma pneumoniae (strain ATCC 29342 / M129 / Subtype 1) (Mycoplasmoides pneumoniae).